We begin with the raw amino-acid sequence, 232 residues long: 2,3-bisphosphoglycerate-dependent phosphoglycerate mutase (232 aa).

Residues 10–17 (RHGESQWN), 23–24 (TG), R62, 89–92 (ERHY), K100, 116–117 (RR), and 185–186 (GN) contribute to the substrate site. H11 acts as the Tele-phosphohistidine intermediate in catalysis. The Proton donor/acceptor role is filled by E89.

Belongs to the phosphoglycerate mutase family. BPG-dependent PGAM subfamily. In terms of assembly, homodimer.

It carries out the reaction (2R)-2-phosphoglycerate = (2R)-3-phosphoglycerate. It functions in the pathway carbohydrate degradation; glycolysis; pyruvate from D-glyceraldehyde 3-phosphate: step 3/5. Its function is as follows. Catalyzes the interconversion of 2-phosphoglycerate and 3-phosphoglycerate. The polypeptide is 2,3-bisphosphoglycerate-dependent phosphoglycerate mutase (Blochmanniella floridana).